The primary structure comprises 570 residues: MFS-type transporter pigP (570 aa).

A disordered region spans residues 14–54 (GMIKKAHPEQTPPDVSHEGDVATEKGDSDGVEQAAPTGPTD). The segment covering 28 to 41 (VSHEGDVATEKGDS) has biased composition (basic and acidic residues). Helical transmembrane passes span 65–85 (VMIMSGITLVCFLMLLDTSII), 99–119 (LPDVGWYGSAYLLASASLVPL), 131–151 (WSFVSFFAVFELGSLLCGVAT), 162–182 (VAGMGGSGIQNGAFTIIAGCV), 192–212 (GLLMGFAQLGIVIGPLIGGAF), 221–241 (CFYINLPIGAVVGLLLFFVHI), and 263–283 (LVGFVLFAPAAVQFLLALQYG). Residue Asn290 is glycosylated (N-linked (GlcNAc...) asparagine). 7 consecutive transmembrane segments (helical) span residues 293–313 (VVIGLFCGAGATFVCFILWEW), 336–356 (VVYGFLMATLLVASYYLPIYF), 369–389 (VYILPSILSQSALAIISGALV), 392–412 (FGYYLPWSLAGGIVSSVGNGL), 425–445 (WIGYQILLGAGRGAGLQMPII), 455–475 (LIPVAMALIMFCQSFFGSTFL), and 533–553 (VFYLAVGAAVATFVFSCGMGW).

This sequence belongs to the major facilitator superfamily. TCR/Tet family.

The protein localises to the cell membrane. Its function is as follows. MFS-type transporter; part of the gene cluster that mediates the biosynthesis of azaphilone pigments (MonAzPs), very widely used as food colorant. In Monascus ruber (Mold), this protein is MFS-type transporter pigP.